The following is a 262-amino-acid chain: Ornithine carbamoyltransferase (262 aa).

Carbamoyl phosphate-binding positions include 3-7 (STRTR), glutamine 30, arginine 54, and 81-84 (HPTQ). Residues asparagine 114, aspartate 178, and 182–183 (SM) each bind L-ornithine. Residues 219 to 222 (HCLP) and threonine 247 contribute to the carbamoyl phosphate site.

Belongs to the aspartate/ornithine carbamoyltransferase superfamily. OTCase family.

The protein resides in the cytoplasm. It carries out the reaction carbamoyl phosphate + L-ornithine = L-citrulline + phosphate + H(+). The protein operates within amino-acid biosynthesis; L-arginine biosynthesis; L-arginine from L-ornithine and carbamoyl phosphate: step 1/3. Functionally, reversibly catalyzes the transfer of the carbamoyl group from carbamoyl phosphate (CP) to the N(epsilon) atom of ornithine (ORN) to produce L-citrulline. In Neisseria mucosa, this protein is Ornithine carbamoyltransferase (argF).